The chain runs to 122 residues: Large ribosomal subunit protein bL12 (122 aa).

Belongs to the bacterial ribosomal protein bL12 family. As to quaternary structure, homodimer. Part of the 50S ribosomal subunit; present in 4 copies per ribosome. Forms part of the ribosomal stalk which helps the ribosome interact with GTP-bound translation factors. Forms a pentameric L10(L12)2(L12)2 complex, where L10 forms an elongated spine to which 2 L12 dimers bind in a sequential fashion.

Its function is as follows. Forms part of the ribosomal stalk which helps the ribosome interact with GTP-bound translation factors. Is thus essential for accurate translation. This is Large ribosomal subunit protein bL12 from Geobacillus stearothermophilus (Bacillus stearothermophilus).